The sequence spans 189 residues: Cell division protein SepF (189 aa).

The interval 25-70 (ESRVQQQAVKPSNSRPAQQEPVRDIKQPRLVSSSSQHVTNTPSSNE) is disordered. 2 stretches are compositionally biased toward polar residues: residues 27–41 (RVQQ…SRPA) and 54–70 (LVSS…SSNE).

This sequence belongs to the SepF family. Homodimer. Interacts with FtsZ.

The protein localises to the cytoplasm. In terms of biological role, cell division protein that is part of the divisome complex and is recruited early to the Z-ring. Probably stimulates Z-ring formation, perhaps through the cross-linking of FtsZ protofilaments. Its function overlaps with FtsA. This Streptococcus gordonii (strain Challis / ATCC 35105 / BCRC 15272 / CH1 / DL1 / V288) protein is Cell division protein SepF.